The primary structure comprises 360 residues: Photosystem II protein D1 (360 aa).

3 consecutive transmembrane segments (helical) span residues 30–47, 119–134, and 143–157; these read YVGW…AATT, HFLI…QWEL, and WICV…AAFA. His119 lines the chlorophyll a pocket. Tyr127 contacts pheophytin a. The [CaMn4O5] cluster site is built by Asp171 and Glu190. A helical transmembrane segment spans residues 198–219; that stretch reads FHMAGVAGMFGGALFSAMHGSL. His199 serves as a coordination point for chlorophyll a. Residues His216 and 265 to 266 contribute to the a quinone site; that span reads SF. His216 is a binding site for Fe cation. His273 provides a ligand contact to Fe cation. A helical membrane pass occupies residues 275–289; that stretch reads FLASWPVICVWLTSM. Residues His333, Glu334, Asp343, and Ala345 each contribute to the [CaMn4O5] cluster site. A propeptide spanning residues 346–360 is cleaved from the precursor; it reads AAESTSVALVAPAIG.

It belongs to the reaction center PufL/M/PsbA/D family. In terms of assembly, PSII is composed of 1 copy each of membrane proteins PsbA, PsbB, PsbC, PsbD, PsbE, PsbF, PsbH, PsbI, PsbJ, PsbK, PsbL, PsbM, PsbT, PsbX, PsbY, Psb30/Ycf12, peripheral proteins PsbO, CyanoQ (PsbQ), PsbU, PsbV and a large number of cofactors. It forms dimeric complexes. It depends on The D1/D2 heterodimer binds P680, chlorophylls that are the primary electron donor of PSII, and subsequent electron acceptors. It shares a non-heme iron and each subunit binds pheophytin, quinone, additional chlorophylls, carotenoids and lipids. D1 provides most of the ligands for the Mn4-Ca-O5 cluster of the oxygen-evolving complex (OEC). There is also a Cl(-1) ion associated with D1 and D2, which is required for oxygen evolution. The PSII complex binds additional chlorophylls, carotenoids and specific lipids. as a cofactor. In terms of processing, tyr-162 forms a radical intermediate that is referred to as redox-active TyrZ, YZ or Y-Z. C-terminally processed by CtpA; processing is essential to allow assembly of the oxygen-evolving complex and thus photosynthetic growth.

It localises to the cellular thylakoid membrane. The enzyme catalyses 2 a plastoquinone + 4 hnu + 2 H2O = 2 a plastoquinol + O2. Photosystem II (PSII) is a light-driven water:plastoquinone oxidoreductase that uses light energy to abstract electrons from H(2)O, generating O(2) and a proton gradient subsequently used for ATP formation. It consists of a core antenna complex that captures photons, and an electron transfer chain that converts photonic excitation into a charge separation. The D1/D2 (PsbA/PsbD) reaction center heterodimer binds P680, the primary electron donor of PSII as well as several subsequent electron acceptors. This Prochlorococcus marinus (strain NATL1A) protein is Photosystem II protein D1.